The sequence spans 367 residues: 2-oxoisovalerate dehydrogenase subunit alpha (367 aa).

Substrate contacts are provided by residues Phe66, Tyr95, 128–131, and Ser144; that span reads MPEH. 94-96 contributes to the thiamine diphosphate binding site; that stretch reads YYR. Thiamine diphosphate contacts are provided by residues 144 to 146, 174 to 180, 204 to 208, and His273; these read SPI, GDGATSE, and NFYAI. Residues Asp175, Asn204, and Tyr206 each contribute to the Mg(2+) site.

The protein belongs to the BCKDHA family. Heterotetramer of two alpha and two beta chains. Directly associated with ODBB in the E1 complex. It depends on thiamine diphosphate as a cofactor.

The enzyme catalyses N(6)-[(R)-lipoyl]-L-lysyl-[protein] + 3-methyl-2-oxobutanoate + H(+) = N(6)-[(R)-S(8)-2-methylpropanoyldihydrolipoyl]-L-lysyl-[protein] + CO2. In terms of biological role, the branched-chain alpha-keto dehydrogenase complex catalyzes the overall conversion of alpha-keto acids to acyl-CoA and CO(2). It contains multiple copies of three enzymatic components: branched-chain alpha-keto acid decarboxylase (E1), lipoamide acyltransferase (E2) and lipoamide dehydrogenase (E3). The protein is 2-oxoisovalerate dehydrogenase subunit alpha of Thermus thermophilus (strain ATCC BAA-163 / DSM 7039 / HB27).